The primary structure comprises 228 residues: MHKIAAAPPPSATPGGGLETPLAAPKYGTLIPNRIFVGGISGDTTEADLTRVFSAYGTVKSTKIIVDRAGVSKGYGFVTFETEQEAQRLQADGECVVLRDRKLNIAPAIKKQPNPLQSIVATNGAVYYTTTPPAPISNIPMDQFAAAVYPPAAGVPAIYPPSAMQYQPFYQYYSVPMNVPTIWPQNYQENHSPLLHSPTSNPHSPHSQSHPQSPCWSIEDLRDTLPRV.

One can recognise an RRM domain in the interval 33–110; the sequence is NRIFVGGISG…RKLNIAPAIK (78 aa). The DAZ domain occupies 151-178; it reads PAAGVPAIYPPSAMQYQPFYQYYSVPMN. Positions 193 to 214 are enriched in low complexity; that stretch reads PLLHSPTSNPHSPHSQSHPQSP. The tract at residues 193-228 is disordered; sequence PLLHSPTSNPHSPHSQSHPQSPCWSIEDLRDTLPRV. The segment covering 219–228 has biased composition (basic and acidic residues); sequence EDLRDTLPRV.

This sequence belongs to the RRM DAZ family. In terms of assembly, interacts with the translational regulator orb2. Testis specific.

Its subcellular location is the nucleus. The protein localises to the cytoplasm. RNA-binding protein that plays a central role in spermatogenesis. Required for meiotic entry and germline differentiation, at the transition between G2 and M phases of meiosis I. Acts by regulating translation of specific mRNAs, possibly by binding to their 3'-UTR. Essential for translation of twine (twe) mRNA. Required for the expression of various genes such as CG6784, CG17210, CG15841 scpr-B, scpr-C, and rho-6. The chain is Protein boule (bol) from Drosophila melanogaster (Fruit fly).